Consider the following 466-residue polypeptide: Cysteine--tRNA ligase (466 aa).

A Zn(2+)-binding site is contributed by cysteine 29. The 'HIGH' region signature appears at 31 to 41 (ATVQAAPHIGH). The Zn(2+) site is built by cysteine 208, histidine 233, and glutamate 237. Positions 264–268 (KMSKS) match the 'KMSKS' region motif. Lysine 267 is an ATP binding site.

This sequence belongs to the class-I aminoacyl-tRNA synthetase family. As to quaternary structure, monomer. Zn(2+) is required as a cofactor.

It localises to the cytoplasm. It carries out the reaction tRNA(Cys) + L-cysteine + ATP = L-cysteinyl-tRNA(Cys) + AMP + diphosphate. In Streptomyces avermitilis (strain ATCC 31267 / DSM 46492 / JCM 5070 / NBRC 14893 / NCIMB 12804 / NRRL 8165 / MA-4680), this protein is Cysteine--tRNA ligase.